The sequence spans 227 residues: PKHD-type hydroxylase Bamb_4479 (227 aa).

Positions 80-179 (QVYPPLFNRY…RVASFFWVQS (100 aa)) constitute a Fe2OG dioxygenase domain. Fe cation-binding residues include His-98, Asp-100, and His-160. Arg-170 is a 2-oxoglutarate binding site.

Requires Fe(2+) as cofactor. It depends on L-ascorbate as a cofactor.

The protein is PKHD-type hydroxylase Bamb_4479 of Burkholderia ambifaria (strain ATCC BAA-244 / DSM 16087 / CCUG 44356 / LMG 19182 / AMMD) (Burkholderia cepacia (strain AMMD)).